Consider the following 226-residue polypeptide: Ribonuclease 3 (226 aa).

Residues 6 to 128 (IQKLQKILGY…LIGSIFLDSN (123 aa)) enclose the RNase III domain. Residue Glu-41 coordinates Mg(2+). The active site involves Asp-45. 2 residues coordinate Mg(2+): Asn-114 and Glu-117. Glu-117 is an active-site residue. The DRBM domain maps to 155 to 225 (DPKTRLQEYL…AQNALIKLGI (71 aa)).

Belongs to the ribonuclease III family. Homodimer. Mg(2+) is required as a cofactor.

Its subcellular location is the cytoplasm. The catalysed reaction is Endonucleolytic cleavage to 5'-phosphomonoester.. Its function is as follows. Digests double-stranded RNA. Involved in the processing of primary rRNA transcript to yield the immediate precursors to the large and small rRNAs (23S and 16S). Processes some mRNAs, and tRNAs when they are encoded in the rRNA operon. Processes pre-crRNA and tracrRNA of type II CRISPR loci if present in the organism. The polypeptide is Ribonuclease 3 (Buchnera aphidicola subsp. Baizongia pistaciae (strain Bp)).